Consider the following 436-residue polypeptide: Trigger factor (436 aa).

One can recognise a PPIase FKBP-type domain in the interval Gly163–Pro248.

The protein belongs to the FKBP-type PPIase family. Tig subfamily.

The protein resides in the cytoplasm. The enzyme catalyses [protein]-peptidylproline (omega=180) = [protein]-peptidylproline (omega=0). Involved in protein export. Acts as a chaperone by maintaining the newly synthesized protein in an open conformation. Functions as a peptidyl-prolyl cis-trans isomerase. This chain is Trigger factor, found in Polaromonas naphthalenivorans (strain CJ2).